The sequence spans 429 residues: MIDPNLLRNNLAEVAEKLKVKRNFMLDTEKLTALEDQRKNLQVTTENLQAERNARSKAIGAAKARGEDIAPLLAEMDDMGNQLTEAKAQLDAVLAEINQIALSIPNLPADEVPLGKDDTENKEILRWGTPRTFDFEVKDHVTLGEEANGLDFAAGAKLTGARFAVMKGQIAKMHRALAQFMLDLHTEQHGYLETYVPYLVNHATLYGTGQLPKFGEDLFHTLALQGEQPYALIPTAEVPVTNLVRDVIIDEAELPIKMTAHTPCFRSEAGSYGRDTRGLIRMHQFDKVEMVQIVDPDKSMEALEELTGHAEKVLQLLNLPYRKVLLCTGDMGFGSCKTYDLEVWVPAQNTYREISSCSNMWDFQARRMQARCKAKGDKKTHLVHTLNGSGLAVGRTLVAVLENYQNADGSITVPEVLRPYMGGLDVIGK.

Thr235–Glu237 is an L-serine binding site. ATP is bound at residue Arg266–Glu268. Position 289 (Glu289) interacts with L-serine. Glu353–Ser356 contacts ATP. Residue Ser389 participates in L-serine binding.

It belongs to the class-II aminoacyl-tRNA synthetase family. Type-1 seryl-tRNA synthetase subfamily. Homodimer. The tRNA molecule binds across the dimer.

It localises to the cytoplasm. The enzyme catalyses tRNA(Ser) + L-serine + ATP = L-seryl-tRNA(Ser) + AMP + diphosphate + H(+). It carries out the reaction tRNA(Sec) + L-serine + ATP = L-seryl-tRNA(Sec) + AMP + diphosphate + H(+). It participates in aminoacyl-tRNA biosynthesis; selenocysteinyl-tRNA(Sec) biosynthesis; L-seryl-tRNA(Sec) from L-serine and tRNA(Sec): step 1/1. Its function is as follows. Catalyzes the attachment of serine to tRNA(Ser). Is also able to aminoacylate tRNA(Sec) with serine, to form the misacylated tRNA L-seryl-tRNA(Sec), which will be further converted into selenocysteinyl-tRNA(Sec). This is Serine--tRNA ligase from Haemophilus influenzae (strain PittGG).